Consider the following 241-residue polypeptide: Leucyl/phenylalanyl-tRNA--protein transferase (241 aa).

The protein belongs to the L/F-transferase family.

It is found in the cytoplasm. It catalyses the reaction N-terminal L-lysyl-[protein] + L-leucyl-tRNA(Leu) = N-terminal L-leucyl-L-lysyl-[protein] + tRNA(Leu) + H(+). The enzyme catalyses N-terminal L-arginyl-[protein] + L-leucyl-tRNA(Leu) = N-terminal L-leucyl-L-arginyl-[protein] + tRNA(Leu) + H(+). It carries out the reaction L-phenylalanyl-tRNA(Phe) + an N-terminal L-alpha-aminoacyl-[protein] = an N-terminal L-phenylalanyl-L-alpha-aminoacyl-[protein] + tRNA(Phe). In terms of biological role, functions in the N-end rule pathway of protein degradation where it conjugates Leu, Phe and, less efficiently, Met from aminoacyl-tRNAs to the N-termini of proteins containing an N-terminal arginine or lysine. The protein is Leucyl/phenylalanyl-tRNA--protein transferase of Neisseria meningitidis serogroup B (strain ATCC BAA-335 / MC58).